The sequence spans 251 residues: MLKGHLHSVESLGTVDGPGLRYILFTQGCLLRCLYCHNPDTWKISEPSREVTVDEMVNEILPYKPYFDASGGGVTVSGGEPLLQMPFLEKLFAELKENGVHTCLDTSAGCANDTKAFQRHFEELQKHTDLILLDIKHIDNDKHIRLTGKPNTHILNFARKLSDMKQPVWIRHVLVPGYSDDKDDLIKLGEFINSLDNVEKFEILPYHQLGVHKWKTLGIAYELEDVEAPDDEAVKAAYRYVNFKGKIPVEL.

The Radical SAM core domain maps to 15 to 244 (VDGPGLRYIL…KAAYRYVNFK (230 aa)). [4Fe-4S] cluster-binding residues include Cys-29, Cys-33, and Cys-36. S-adenosyl-L-methionine-binding positions include 35–37 (YCH), Gly-79, 134–136 (DIK), and His-207.

This sequence belongs to the organic radical-activating enzymes family. [4Fe-4S] cluster is required as a cofactor.

Its subcellular location is the cytoplasm. The enzyme catalyses glycyl-[formate C-acetyltransferase] + reduced [flavodoxin] + S-adenosyl-L-methionine = glycin-2-yl radical-[formate C-acetyltransferase] + semiquinone [flavodoxin] + 5'-deoxyadenosine + L-methionine + H(+). Its function is as follows. Activation of pyruvate formate-lyase under anaerobic conditions by generation of an organic free radical, using S-adenosylmethionine and reduced flavodoxin as cosubstrates to produce 5'-deoxy-adenosine. The sequence is that of Pyruvate formate-lyase-activating enzyme (pflA) from Staphylococcus aureus (strain N315).